A 135-amino-acid chain; its full sequence is Transcription antitermination protein NusB (135 aa).

This sequence belongs to the NusB family.

Involved in transcription antitermination. Required for transcription of ribosomal RNA (rRNA) genes. Binds specifically to the boxA antiterminator sequence of the ribosomal RNA (rrn) operons. The sequence is that of Transcription antitermination protein NusB from Nocardioides sp. (strain ATCC BAA-499 / JS614).